A 487-amino-acid chain; its full sequence is F-box/LRR-repeat protein At1g48400 (487 aa).

The 49-residue stretch at 9 to 57 (RDSISNLPDEILGKILSLLPTKVAASTSVLSKRWRNLLGLVDNLCFDES) folds into the F-box domain. 6 LRR repeats span residues 71 to 97 (SLRF…SLSR), 125 to 153 (HLHA…TLSA), 174 to 199 (SILG…YMRD), 225 to 251 (THNP…DYSS), 327 to 358 (TLHL…SIES), and 359 to 384 (NKDK…VIKG).

The protein is F-box/LRR-repeat protein At1g48400 of Arabidopsis thaliana (Mouse-ear cress).